Consider the following 246-residue polypeptide: Receptor-transporting protein 4 (246 aa).

Over 1–224 (MVVDFWTWEQ…EKLGPSRDPD (224 aa)) the chain is Cytoplasmic. The segment at 48–159 (RAFGWFRCSS…DTANCEACTL (112 aa)) adopts a 3CxxC-type zinc-finger fold. Residues 225–245 (PLNICVFILLLVFIVVKCFTS) traverse the membrane as a helical segment.

The protein belongs to the TMEM7 family. In terms of assembly, interacts with TASR16. Interacts with OPRD1 and OPRM1; the interaction promotes cell surface localization of the OPDR1-OPRM1 heterodimer. (Microbial infection) Interacts with influenza A virus protein NS1; this interaction sequesters NS1 from interacting with RIG-I/DDX58 to restore antiviral signaling. In terms of tissue distribution, expressed in circumvallate papillae and testis.

The protein localises to the membrane. The protein resides in the cytoplasm. Functionally, chaperone protein that facilitates the trafficking and functional cell surface expression of some G-protein coupled receptors (GPCRs). Promotes functional expression of the bitter taste receptor TAS2R16. Also promotes functional expression of the opioid receptor heterodimer OPRD1-OPRM1. In addition, acts as a potent IFN-inducible suppressor of pathogens including lyssavirus rabies, influenza A or yellow fever virus. Mechanistically, associates with the viral replicase, binds viral RNA, and thereby suppresses viral genome amplification that replicates at the endoplasmic reticulum. In addition, restores antiviral signaling by interacting with and sequestering influenza A virus protein NS1. The chain is Receptor-transporting protein 4 (RTP4) from Homo sapiens (Human).